A 132-amino-acid polypeptide reads, in one-letter code: Small ribosomal subunit protein uS8c (132 aa).

It belongs to the universal ribosomal protein uS8 family. In terms of assembly, part of the 30S ribosomal subunit.

The protein localises to the plastid. The protein resides in the chloroplast. In terms of biological role, one of the primary rRNA binding proteins, it binds directly to 16S rRNA central domain where it helps coordinate assembly of the platform of the 30S subunit. The polypeptide is Small ribosomal subunit protein uS8c (rps8) (Anthoceros angustus (Hornwort)).